A 363-amino-acid chain; its full sequence is Protein MAK32 (363 aa).

This sequence to S.pombe SpAC4G8.14c.

In terms of biological role, necessary for the structural stability of L-A double-stranded RNA-containing particles. Necessary for growth at 37 degrees Celsius as well as for maintenance of the killer plasmid. The protein is Protein MAK32 (MAK32) of Saccharomyces cerevisiae (strain ATCC 204508 / S288c) (Baker's yeast).